Here is a 240-residue protein sequence, read N- to C-terminus: UDP-2,3-diacylglucosamine hydrolase (240 aa).

5 residues coordinate Mn(2+): Asp8, His10, Asp41, Asn79, and His114. A substrate-binding site is contributed by 79 to 80 (NR). 5 residues coordinate substrate: Asp122, Ser160, Asn164, Lys167, and His195. Mn(2+) is bound by residues His195 and His197.

The protein belongs to the LpxH family. Mn(2+) serves as cofactor.

It is found in the cell inner membrane. It catalyses the reaction UDP-2-N,3-O-bis[(3R)-3-hydroxytetradecanoyl]-alpha-D-glucosamine + H2O = 2-N,3-O-bis[(3R)-3-hydroxytetradecanoyl]-alpha-D-glucosaminyl 1-phosphate + UMP + 2 H(+). The protein operates within glycolipid biosynthesis; lipid IV(A) biosynthesis; lipid IV(A) from (3R)-3-hydroxytetradecanoyl-[acyl-carrier-protein] and UDP-N-acetyl-alpha-D-glucosamine: step 4/6. Functionally, hydrolyzes the pyrophosphate bond of UDP-2,3-diacylglucosamine to yield 2,3-diacylglucosamine 1-phosphate (lipid X) and UMP by catalyzing the attack of water at the alpha-P atom. Involved in the biosynthesis of lipid A, a phosphorylated glycolipid that anchors the lipopolysaccharide to the outer membrane of the cell. The chain is UDP-2,3-diacylglucosamine hydrolase from Salmonella newport (strain SL254).